Consider the following 795-residue polypeptide: Histidine biosynthesis trifunctional protein (795 aa).

The tract at residues 1–225 (MLPVVPVFNA…VVRQGGSGSF (225 aa)) is phosphoribosyl-AMP cyclohydrolase. A phosphoribosyl-ATP pyrophosphohydrolase region spans residues 226-308 (CHLETESCFG…FYFAMARLVA (83 aa)). The histidinol dehydrogenase stretch occupies residues 309-795 (NGVSLEDVER…KLGLLPSGFE (487 aa)). Residues glutamine 614 and histidine 617 each contribute to the Zn(2+) site. Catalysis depends on residues glutamate 683 and histidine 684. 2 residues coordinate Zn(2+): aspartate 717 and histidine 776.

It in the C-terminal section; belongs to the histidinol dehydrogenase family. Requires Zn(2+) as cofactor.

It carries out the reaction 1-(5-phospho-beta-D-ribosyl)-5'-AMP + H2O = 1-(5-phospho-beta-D-ribosyl)-5-[(5-phospho-beta-D-ribosylamino)methylideneamino]imidazole-4-carboxamide. The catalysed reaction is 1-(5-phospho-beta-D-ribosyl)-ATP + H2O = 1-(5-phospho-beta-D-ribosyl)-5'-AMP + diphosphate + H(+). The enzyme catalyses L-histidinol + 2 NAD(+) + H2O = L-histidine + 2 NADH + 3 H(+). Its pathway is amino-acid biosynthesis; L-histidine biosynthesis; L-histidine from 5-phospho-alpha-D-ribose 1-diphosphate: step 2/9. It functions in the pathway amino-acid biosynthesis; L-histidine biosynthesis; L-histidine from 5-phospho-alpha-D-ribose 1-diphosphate: step 3/9. It participates in amino-acid biosynthesis; L-histidine biosynthesis; L-histidine from 5-phospho-alpha-D-ribose 1-diphosphate: step 9/9. This chain is Histidine biosynthesis trifunctional protein (HIS4), found in Kluyveromyces lactis (strain ATCC 8585 / CBS 2359 / DSM 70799 / NBRC 1267 / NRRL Y-1140 / WM37) (Yeast).